The following is a 290-amino-acid chain: MQGILSIQSHVAYGHAGNSSAVFPMQRMGFEVWPIHTVQFSNHTQYQEGWTGRAFSADDISELVRGLNNIGALEKCQAVLTGYQGSAEQCLAVEETVTKVKQANPDALYVCDPVMGAPDKGCIVAPGIAENLLNRLMPMADVIVPNQFELSQFAEMEIHTLDDAIIACQRALAKGPKVVLVKHLYCLSDESFNMLLATQEGTYLAKRPHFEFAKAPVGAGDLISAIFTAGLLKGWTPKQAFQHCHDACYGVLNATYQAGEWELQTIAAQQEFVEPSKHFPLEEVTLKTVE.

Substrate contacts are provided by residues serine 9 and 44–45 (TQ). ATP is bound by residues aspartate 112, valine 144, glutamate 149, and lysine 182. Aspartate 221 serves as a coordination point for substrate.

Belongs to the pyridoxine kinase family. PdxY subfamily. As to quaternary structure, homodimer. It depends on Mg(2+) as a cofactor.

It carries out the reaction pyridoxal + ATP = pyridoxal 5'-phosphate + ADP + H(+). The protein operates within cofactor metabolism; pyridoxal 5'-phosphate salvage; pyridoxal 5'-phosphate from pyridoxal: step 1/1. Functionally, pyridoxal kinase involved in the salvage pathway of pyridoxal 5'-phosphate (PLP). Catalyzes the phosphorylation of pyridoxal to PLP. The protein is Pyridoxal kinase PdxY of Vibrio vulnificus (strain CMCP6).